The following is a 2286-amino-acid chain: DNA polymerase epsilon catalytic subunit A (2286 aa).

The tract at residues 1–30 (MSLRSGGRRRADPGADGEASRDDGATSSVS) is disordered. Over residues 9–24 (RRADPGADGEASRDDG) the composition is skewed to basic and acidic residues. Serine 1184, serine 1297, serine 1317, and serine 1940 each carry phosphoserine. Residues 1939–1969 (DSQKAGGAEDEQENEDDEEERDGEEEEEAEE) are disordered. Residues 1946 to 1969 (AEDEQENEDDEEERDGEEEEEAEE) are compositionally biased toward acidic residues. 4 residues coordinate Zn(2+): cysteine 2158, cysteine 2161, cysteine 2187, and cysteine 2190. The segment at 2158 to 2190 (CRSCNFCRDLDLCKDSSFSEDGAVLPQWLCSNC) adopts a CysA-type zinc-finger fold. [4Fe-4S] cluster contacts are provided by cysteine 2221, cysteine 2224, cysteine 2236, and cysteine 2238. A CysB motif motif is present at residues 2221–2238 (CLKCRGVKETSMPVYCSC).

It belongs to the DNA polymerase type-B family. In terms of assembly, component of the DNA polymerase epsilon complex consisting of four subunits: the catalytic subunit POLE and the accessory subunits POLE2, POLE3 and POLE4. Interacts with RAD17 and TOPBP1.

The protein localises to the nucleus. The enzyme catalyses DNA(n) + a 2'-deoxyribonucleoside 5'-triphosphate = DNA(n+1) + diphosphate. Functionally, catalytic component of the DNA polymerase epsilon complex. Participates in chromosomal DNA replication. Required during synthesis of the leading DNA strands at the replication fork, binds at/or near replication origins and moves along DNA with the replication fork. Has 3'-5' proofreading exonuclease activity that corrects errors arising during DNA replication. Involved in DNA synthesis during DNA repair. Along with DNA polymerase POLD1 and DNA polymerase POLK, has a role in excision repair (NER) synthesis following UV irradiation. The protein is DNA polymerase epsilon catalytic subunit A of Homo sapiens (Human).